The chain runs to 644 residues: uncharacterized protein (644 aa).

254–261 contributes to the ATP binding site; it reads GKMGAGKS.

This is an uncharacterized protein from Bacillus anthracis.